Reading from the N-terminus, the 339-residue chain is Polyhydroxybutyrate depolymerase (339 aa).

Positions 1 to 20 are cleaved as a signal peptide; the sequence is MFDSVKIAWLVALGAAQVAA. Ser-39 is an active-site residue. A disulfide bond links Cys-70 and Cys-79. The active site involves Asp-121. N-linked (GlcNAc...) asparagine glycosylation occurs at Asn-144. His-155 is an active-site residue. 3 cysteine pairs are disulfide-bonded: Cys-169–Cys-180, Cys-234–Cys-241, and Cys-250–Cys-304. Trp-307 is a binding site for (3R)-hydroxybutanoate trimer.

This sequence belongs to the carbohydrate esterase 1 (CE1) family.

The protein localises to the secreted. The enzyme catalyses [(3R)-hydroxybutanoate](n) + H2O = [(3R)-hydroxybutanoate](n-1) + (R)-3-hydroxybutanoate + H(+). Its activity is regulated as follows. The enzyme is completely inhibited by dithiothreitol (DTT) and diisopropylfluorophosphate (DFP), and partially inhibited by HgCl(2) and by enzyme3-(p-nitrophenoxy)propane (EPNP). Activity is not affected by N-ethylmaleimide (NEM) or phenylmethylsulfonyl fluoride (PMSF). In terms of biological role, esterase involved in the hydrolysis of polyhydroxybutyrate, a microbial polyester that can be produced from renewable resources. In Talaromyces funiculosus (Fruitlet core rot fungus), this protein is Polyhydroxybutyrate depolymerase.